We begin with the raw amino-acid sequence, 396 residues long: Elongation factor Tu 1 (396 aa).

One can recognise a tr-type G domain in the interval 10–206 (KPHCNVGTIG…AVDDYIPQPE (197 aa)). The G1 stretch occupies residues 19 to 26 (GHVDHGKT). Position 19–26 (19–26 (GHVDHGKT)) interacts with GTP. Thr-26 contacts Mg(2+). The segment at 60–64 (GITIS) is G2. The tract at residues 81-84 (DCPG) is G3. Residues 81 to 85 (DCPGH) and 136 to 139 (NKCD) contribute to the GTP site. Residues 136 to 139 (NKCD) are G4. The tract at residues 174–176 (SAL) is G5.

It belongs to the TRAFAC class translation factor GTPase superfamily. Classic translation factor GTPase family. EF-Tu/EF-1A subfamily. In terms of assembly, monomer.

Its subcellular location is the cytoplasm. The catalysed reaction is GTP + H2O = GDP + phosphate + H(+). GTP hydrolase that promotes the GTP-dependent binding of aminoacyl-tRNA to the A-site of ribosomes during protein biosynthesis. This Rhodospirillum rubrum (strain ATCC 11170 / ATH 1.1.1 / DSM 467 / LMG 4362 / NCIMB 8255 / S1) protein is Elongation factor Tu 1.